The chain runs to 368 residues: Agmatine deiminase (368 aa).

Catalysis depends on cysteine 357, which acts as the Amidino-cysteine intermediate.

Belongs to the agmatine deiminase family. Homodimer.

It carries out the reaction agmatine + H2O = N-carbamoylputrescine + NH4(+). It functions in the pathway amine and polyamine biosynthesis; putrescine biosynthesis via agmatine pathway; N-carbamoylputrescine from agmatine: step 1/1. Mediates the hydrolysis of agmatine into N-carbamoylputrescine in the arginine decarboxylase (ADC) pathway of putrescine biosynthesis, a basic polyamine. This is Agmatine deiminase from Pseudomonas syringae pv. syringae (strain B728a).